We begin with the raw amino-acid sequence, 322 residues long: Phosphatidylglycerol--prolipoprotein diacylglyceryl transferase (322 aa).

4 consecutive transmembrane segments (helical) span residues 21–41 (PLPI…AIWL), 50–70 (GGNP…GIIG), 98–118 (NGGL…WAYF), and 123–143 (IPLA…QAIG). Arg-144 provides a ligand contact to a 1,2-diacyl-sn-glycero-3-phospho-(1'-sn-glycerol). The next 2 helical transmembrane spans lie at 191 to 211 (VHPT…LLIW) and 254 to 274 (INTL…LRLG). Positions 283–322 (VDPAYHAAQAERDDTETAGLDATTGTVPGDSPETTGKKRK) are disordered.

The protein belongs to the Lgt family.

It is found in the cell membrane. The catalysed reaction is L-cysteinyl-[prolipoprotein] + a 1,2-diacyl-sn-glycero-3-phospho-(1'-sn-glycerol) = an S-1,2-diacyl-sn-glyceryl-L-cysteinyl-[prolipoprotein] + sn-glycerol 1-phosphate + H(+). Its pathway is protein modification; lipoprotein biosynthesis (diacylglyceryl transfer). Its function is as follows. Catalyzes the transfer of the diacylglyceryl group from phosphatidylglycerol to the sulfhydryl group of the N-terminal cysteine of a prolipoprotein, the first step in the formation of mature lipoproteins. The protein is Phosphatidylglycerol--prolipoprotein diacylglyceryl transferase of Corynebacterium efficiens (strain DSM 44549 / YS-314 / AJ 12310 / JCM 11189 / NBRC 100395).